Here is a 361-residue protein sequence, read N- to C-terminus: Histidinol-phosphate aminotransferase (361 aa).

Lys-224 is modified (N6-(pyridoxal phosphate)lysine).

This sequence belongs to the class-II pyridoxal-phosphate-dependent aminotransferase family. Histidinol-phosphate aminotransferase subfamily. As to quaternary structure, homodimer. The cofactor is pyridoxal 5'-phosphate.

It catalyses the reaction L-histidinol phosphate + 2-oxoglutarate = 3-(imidazol-4-yl)-2-oxopropyl phosphate + L-glutamate. It functions in the pathway amino-acid biosynthesis; L-histidine biosynthesis; L-histidine from 5-phospho-alpha-D-ribose 1-diphosphate: step 7/9. The chain is Histidinol-phosphate aminotransferase from Bacillus licheniformis (strain ATCC 14580 / DSM 13 / JCM 2505 / CCUG 7422 / NBRC 12200 / NCIMB 9375 / NCTC 10341 / NRRL NRS-1264 / Gibson 46).